The chain runs to 98 residues: Small ribosomal subunit protein uS19 (98 aa).

This sequence belongs to the universal ribosomal protein uS19 family.

Protein S19 forms a complex with S13 that binds strongly to the 16S ribosomal RNA. The polypeptide is Small ribosomal subunit protein uS19 (Chlorobaculum tepidum (strain ATCC 49652 / DSM 12025 / NBRC 103806 / TLS) (Chlorobium tepidum)).